We begin with the raw amino-acid sequence, 96 residues long: MLERAEVDKVAHLARLSLTDAESEQFTTQLGDILDYFEQLSELDVAEVEPTTRAIDVSNVTRVDHLTPYDDRESILACAPDQEDEYFKVPKIMGES.

This sequence belongs to the GatC family. In terms of assembly, heterotrimer of A, B and C subunits.

It catalyses the reaction L-glutamyl-tRNA(Gln) + L-glutamine + ATP + H2O = L-glutaminyl-tRNA(Gln) + L-glutamate + ADP + phosphate + H(+). The catalysed reaction is L-aspartyl-tRNA(Asn) + L-glutamine + ATP + H2O = L-asparaginyl-tRNA(Asn) + L-glutamate + ADP + phosphate + 2 H(+). In terms of biological role, allows the formation of correctly charged Asn-tRNA(Asn) or Gln-tRNA(Gln) through the transamidation of misacylated Asp-tRNA(Asn) or Glu-tRNA(Gln) in organisms which lack either or both of asparaginyl-tRNA or glutaminyl-tRNA synthetases. The reaction takes place in the presence of glutamine and ATP through an activated phospho-Asp-tRNA(Asn) or phospho-Glu-tRNA(Gln). In Acaryochloris marina (strain MBIC 11017), this protein is Aspartyl/glutamyl-tRNA(Asn/Gln) amidotransferase subunit C.